Reading from the N-terminus, the 310-residue chain is Lipoyl synthase (310 aa).

The [4Fe-4S] cluster site is built by Cys54, Cys59, Cys65, Cys80, Cys84, Cys87, and Ser295. The region spanning 66 to 284 is the Radical SAM core domain; that stretch reads FASGTATFLI…LFGEDNLGFM (219 aa).

It belongs to the radical SAM superfamily. Lipoyl synthase family. The cofactor is [4Fe-4S] cluster.

It is found in the cytoplasm. It catalyses the reaction [[Fe-S] cluster scaffold protein carrying a second [4Fe-4S](2+) cluster] + N(6)-octanoyl-L-lysyl-[protein] + 2 oxidized [2Fe-2S]-[ferredoxin] + 2 S-adenosyl-L-methionine + 4 H(+) = [[Fe-S] cluster scaffold protein] + N(6)-[(R)-dihydrolipoyl]-L-lysyl-[protein] + 4 Fe(3+) + 2 hydrogen sulfide + 2 5'-deoxyadenosine + 2 L-methionine + 2 reduced [2Fe-2S]-[ferredoxin]. Its pathway is protein modification; protein lipoylation via endogenous pathway; protein N(6)-(lipoyl)lysine from octanoyl-[acyl-carrier-protein]: step 2/2. Functionally, catalyzes the radical-mediated insertion of two sulfur atoms into the C-6 and C-8 positions of the octanoyl moiety bound to the lipoyl domains of lipoate-dependent enzymes, thereby converting the octanoylated domains into lipoylated derivatives. The protein is Lipoyl synthase of Prochlorococcus marinus (strain MIT 9215).